A 1384-amino-acid chain; its full sequence is MGKFRSKLKRNGKGKTWSRGESATSNPTQMKHRMKAKSRFFQPNLSLAAATTTGLTMEAVHKHEQSQAFNAETTTVNDVAGSLRSFKLDDDDDGMSGSGTAPTGTAPTGTIKTFQTFASNYSGCSNTCFQKLVTSFRSSSALHKEMLAILSALTEIIRENGGGESSTEYFLLLMEQIEAATEERDIVAGVTLLAMGINSVPAPVLKKRFAQTADTMQRLLQRFMESTNQSVIRHVIGCLSVILRAQDYAAWSYSSTFQYFDAILAFSIHSQPKIRKAAQHAIALIIHGSCFMLPAIKSDDNEMDEAVEQPKVKHHPASSRVAKFCLAQFKPEVLANAQTTVLHTLELLKDTLYGFKTEDIRSVCEHLLSIMTAANVLVRTNCFQTLYSLFLKKSPNLNASLCAKLLAAIHEYRPDKSDIRQTIAWVTVLKEGHLHLATMQLDLCMQALPRLIDVCTTDLWLSDQKELVAGVSNCIKELLQDCVSRACATAEDAQCNRQSVSRIIASLHKMLNAPFGEISRFVILIFSFVFEACGKLFGSELTPPLMTICKRYDTQSAHRLQIEHTVISAIKALGPELVLTAIPLADGKGVMQLERSWLLPLLREGANGASLQFFKEKIVALAMDCQLKWKEFAEAKNNSSSHIYELLCCQLWGLFPGFCRQPRDPEYLRYLAPTLGAAVEKNPEFRPPIYDGLMELLGDNQSAECHQAIGQYAKNFLPRLFNIYTQKPNGTYEADQRKRVLEVIRLYISRAPADVQLELFENAQEQLAASALASFEYDAFFDINAAIVRVQTCKGIKAYFDKYMAPILRNDKSKLVAKDEQKLKKQQRKTYELLRELMTSELPSCQKFTRKNSIVLQQILLDSFNTSCNVCQASRLHCLKSLIDCHSNLAYNDQLVMKAIPEAVLNYKEFSNYKEQVAEQLIKSITQLYHDAGKINDFVDILTAGFAGDEMLVTNTILAFRAVLQQQGEHLTVATLEFVLQQVSVFLVQKSRKQAEAAIAFLITFIKVMPIPLVANHLEAIMRSLSAMTKDTKRYCRIQIGYLLKKLCIRFSPGELAGFVPGDDDVIHRRLKMIRKRTRRDLRKKQNLEAQEDSSDDELVSGLQEKSYTIDDMLADSDSDLPEDMDAKDEAGAAAAASKRSKNAKQQKSTYIREDPDEIVDLADLKSIGNVLTSGSAQTATPAQSQKTKAQLPNGGFKTADDGRLIISDKALRGQGGNDQSDDDSDSDASMAYGTVAKQPKVKRGMEDDSSDEDKLQQKLVPKRVRKGDDAMSMKSGKTTASSRYTAGGKGIHRQLTAGNSDAMSVKSGKSTSRPAGSEYGSKKAKGDMKKSGKLDPYAYIPLTRNNLNKRKRSMNSRKFKSVLRGAGAENGGAGGGRVSKKYK.

Over residues 1-13 (MGKFRSKLKRNGK) the composition is skewed to basic residues. A disordered region spans residues 1–32 (MGKFRSKLKRNGKGKTWSRGESATSNPTQMKH). Residues 19-29 (RGESATSNPTQ) are compositionally biased toward polar residues. Residues serine 82, serine 85, serine 96, serine 1094, serine 1095, serine 1117, and serine 1119 each carry the phosphoserine modification. Disordered stretches follow at residues 1082 to 1102 (LRKKQNLEAQEDSSDDELVSG), 1114 to 1155 (LADS…IRED), and 1176 to 1384 (SAQT…KKYK). 2 stretches are compositionally biased toward acidic residues: residues 1090-1099 (AQEDSSDDEL) and 1114-1127 (LADSDSDLPEDMDA). The span at 1176 to 1191 (SAQTATPAQSQKTKAQ) shows a compositional bias: polar residues. Phosphoserine is present on residues serine 1221, serine 1225, serine 1227, serine 1230, serine 1250, and serine 1251. 2 stretches are compositionally biased toward polar residues: residues 1276–1285 (SGKTTASSRY) and 1297–1315 (TAGNSDAMSVKSGKSTSRP). Basic and acidic residues predominate over residues 1321-1334 (GSKKAKGDMKKSGK). A compositionally biased stretch (basic residues) spans 1348-1362 (LNKRKRSMNSRKFKS). Residues 1369–1378 (AENGGAGGGR) show a composition bias toward gly residues.

The protein belongs to the RRP12 family.

It localises to the nucleus. This Drosophila melanogaster (Fruit fly) protein is RRP12-like protein.